Consider the following 439-residue polypeptide: Deacetylvindoline O-acetyltransferase (439 aa).

The active-site Proton acceptor is the His158. Positions 317–344 (TKLVINELRKEKQKIKNLSREKLTYVAQ) form a coiled coil. Asp380 serves as the catalytic Proton acceptor.

This sequence belongs to the plant acyltransferase family. As to quaternary structure, monomer. In terms of tissue distribution, predominantly expressed in young leaves of mature plants. Low expression in stems and flowers and not detected in roots. Confined to the laticifer and idioblast cells of leaves, stems, and flower buds.

It localises to the cytoplasm. The protein localises to the nucleus. It carries out the reaction 4-O-deacetylvindoline + acetyl-CoA = vindoline + CoA. The protein operates within alkaloid biosynthesis; vindoline biosynthesis. Involved in the biosynthesis of vindoline, a precursor of vinblastine and vincristine. In Catharanthus roseus (Madagascar periwinkle), this protein is Deacetylvindoline O-acetyltransferase.